Here is a 640-residue protein sequence, read N- to C-terminus: Chaperone protein DnaK (640 aa).

Threonine 199 is subject to Phosphothreonine; by autocatalysis. The tract at residues 603–640 (YAAGETESSAAEPGEPQEKTVDAEVVDAEFEEVKDDKK) is disordered. Residues 626-640 (EVVDAEFEEVKDDKK) show a composition bias toward acidic residues.

This sequence belongs to the heat shock protein 70 family.

In terms of biological role, acts as a chaperone. The sequence is that of Chaperone protein DnaK from Methylobacillus flagellatus (strain ATCC 51484 / DSM 6875 / VKM B-1610 / KT).